Reading from the N-terminus, the 933-residue chain is Thyroid peroxidase (933 aa).

The signal sequence occupies residues 1–18 (MRALAVLSVTLVMACTEA). At 19–846 (FFPFISRGKE…TCVDSGRLPR (828 aa)) the chain is on the extracellular side. An N-linked (GlcNAc...) asparagine glycan is attached at Asn129. The cysteines at positions 142 and 158 are disulfide-linked. Residue Asp238 participates in heme b binding. His239 (proton acceptor) is an active-site residue. Position 240 (Asp240) interacts with Ca(2+). 2 cysteine pairs are disulfide-bonded: Cys259/Cys269 and Cys263/Cys286. N-linked (GlcNAc...) asparagine glycosylation occurs at Asn307. Ca(2+)-binding residues include Thr321, Phe323, Asp325, and Ser327. N-linked (GlcNAc...) asparagine glycosylation occurs at Asn342. Residues Glu399 and His494 each coordinate heme b. An N-linked (GlcNAc...) asparagine glycan is attached at Asn569. 2 disulfide bridges follow: Cys598/Cys655 and Cys696/Cys721. The 56-residue stretch at 740–795 (DKCGFPESVENGDFVHCEESGRRVLVYSCRHGYELQGREQLTCTQEGWDFQPPLCK) folds into the Sushi domain. In terms of domain architecture, EGF-like; calcium-binding spans 796 to 839 (DVNECADGAHPPCHASARCRNTKGGFQCLCADPYELGDDGRTCV). 3 disulfide bridges follow: Cys800/Cys814, Cys808/Cys823, and Cys825/Cys838. The chain crosses the membrane as a helical span at residues 847-871 (VTWISMSLAALLIGGFAGLTSTVIC). Over 872 to 933 (RWTRTGTKST…RDTHRLPRAL (62 aa)) the chain is Cytoplasmic. A disordered region spans residues 881–933 (TLPISETGGGTPELRCGKHQAVGTSPQRAAAQDSEQESAGMEGRDTHRLPRAL). Positions 922 to 933 (EGRDTHRLPRAL) are enriched in basic and acidic residues.

Belongs to the peroxidase family. XPO subfamily. Interacts with DUOX1, DUOX2 and CYBA. The cofactor is Ca(2+). Heme b is required as a cofactor. In terms of processing, glycosylated. Post-translationally, heme is covalently bound through a H(2)O(2)-dependent autocatalytic process. Heme insertion is important for the delivery of protein at the cell surface. Cleaved in its N-terminal part.

The protein resides in the membrane. It localises to the cell surface. It catalyses the reaction 2 iodide + H2O2 + 2 H(+) = diiodine + 2 H2O. It carries out the reaction [thyroglobulin]-L-tyrosine + iodide + H2O2 + H(+) = [thyroglobulin]-3-iodo-L-tyrosine + 2 H2O. The catalysed reaction is [thyroglobulin]-3-iodo-L-tyrosine + iodide + H2O2 + H(+) = [thyroglobulin]-3,5-diiodo-L-tyrosine + 2 H2O. The enzyme catalyses 2 [thyroglobulin]-3,5-diiodo-L-tyrosine + H2O2 = [thyroglobulin]-L-thyroxine + [thyroglobulin]-dehydroalanine + 2 H2O. It catalyses the reaction [thyroglobulin]-3-iodo-L-tyrosine + [thyroglobulin]-3,5-diiodo-L-tyrosine + H2O2 = [thyroglobulin]-3,3',5-triiodo-L-thyronine + [thyroglobulin]-dehydroalanine + 2 H2O. It participates in hormone biosynthesis; thyroid hormone biosynthesis. Iodination and coupling of the hormonogenic tyrosines in thyroglobulin to yield the thyroid hormones T(3) and T(4). This chain is Thyroid peroxidase, found in Homo sapiens (Human).